Here is a 294-residue protein sequence, read N- to C-terminus: MTETTDSPSERQPGPAEPELSSRDPDIAGQVFDAAPFDAAPDADSEGDSKAAKTDEPRPAKRSTLREFAVLAVIAVVLYYVMLTFVARPYLIPSESMEPTLHGCSTCVGDRIMVDKLSYRFGSPQPGDVIVFRGPPSWNVGYKSIRSHNVAVRWVQNALSFIGFVPPDENDLVKRVIAVGGQTVQCRSDTGLTVNGRPLKEPYLDPATMMADPSIYPCLGSEFGPVTVPPGRVWVMGDNRTHSADSRAHCPLLCTDDPLPGTVPVANVIGKARLIVWPPSRWGVVRSVNPQQGR.

The disordered stretch occupies residues 1 to 59 (MTETTDSPSERQPGPAEPELSSRDPDIAGQVFDAAPFDAAPDADSEGDSKAAKTDEPRP). At 1–66 (MTETTDSPSE…PRPAKRSTLR (66 aa)) the chain is on the cytoplasmic side. Basic and acidic residues predominate over residues 47–59 (GDSKAAKTDEPRP). A helical membrane pass occupies residues 67–87 (EFAVLAVIAVVLYYVMLTFVA). Topologically, residues 88-294 (RPYLIPSESM…VRSVNPQQGR (207 aa)) are extracellular. Active-site residues include S96 and K174.

It belongs to the peptidase S26 family.

It is found in the cell membrane. The catalysed reaction is Cleavage of hydrophobic, N-terminal signal or leader sequences from secreted and periplasmic proteins.. This is Signal peptidase I (lepB) from Mycobacterium tuberculosis (strain CDC 1551 / Oshkosh).